We begin with the raw amino-acid sequence, 235 residues long: TVP38/TMEM64 family inner membrane protein YdjZ (235 aa).

The Periplasmic portion of the chain corresponds to 1–13; the sequence is MMMMQSRKIWYYR. A helical transmembrane segment spans residues 14–34; it reads ITLIILLFAMLLAWALLPGVH. Topologically, residues 35-64 are cytoplasmic; sequence EFINRSVAAFAAVDQQGIERFIQSYGALAA. Residues 65–85 traverse the membrane as a helical segment; the sequence is VVSFLLMILQAIAAPLPAFLI. The Periplasmic portion of the chain corresponds to 86-95; it reads TFANASLFGA. The tract at residues 90–199 is VTT domain; it reads ASLFGAFWGG…IVYSWAGSML (110 aa). A helical membrane pass occupies residues 96–116; that stretch reads FWGGLLSWTSSMAGAALCFFI. Residues 117–176 lie on the Cytoplasmic side of the membrane; it reads ARVMGREVVEKLTGKTVLDSMDGFFTRYGKHTILVCRLLPFVPFDPISYAAGLTSIRFRS. A helical membrane pass occupies residues 177–197; it reads FFIATGLGQLPATIVYSWAGS. The Periplasmic portion of the chain corresponds to 198–202; that stretch reads MLTGG. Residues 203 to 223 traverse the membrane as a helical segment; sequence TFWFVTGLFILFALTVVIFMA. The Cytoplasmic portion of the chain corresponds to 224–235; the sequence is KKIWLERQKRNA.

The protein belongs to the TVP38/TMEM64 family.

The protein resides in the cell inner membrane. This chain is TVP38/TMEM64 family inner membrane protein YdjZ (ydjZ), found in Escherichia coli (strain K12).